We begin with the raw amino-acid sequence, 533 residues long: Cytochrome P450 9e2 (533 aa).

C475 contacts heme.

This sequence belongs to the cytochrome P450 family. Requires heme as cofactor.

The protein resides in the endoplasmic reticulum membrane. It localises to the microsome membrane. The chain is Cytochrome P450 9e2 (CYP9E2) from Blattella germanica (German cockroach).